The sequence spans 396 residues: Dihydrolipoyllysine-residue acetyltransferase component of pyruvate dehydrogenase complex (396 aa).

A Lipoyl-binding domain is found at 1–69 (MPDIGLEEVE…KTDALIMRCE (69 aa)). Lys35 carries the N6-lipoyllysine modification. The Peripheral subunit-binding (PSBD) domain occupies 104–141 (HATPLIRRLARNLNINLYDVVGTGPKNRILKEDLDLYQ). Residue His369 is part of the active site.

The protein belongs to the 2-oxoacid dehydrogenase family. Forms a 24-polypeptide structural core with octahedral symmetry. Requires (R)-lipoate as cofactor.

It catalyses the reaction N(6)-[(R)-dihydrolipoyl]-L-lysyl-[protein] + acetyl-CoA = N(6)-[(R)-S(8)-acetyldihydrolipoyl]-L-lysyl-[protein] + CoA. Its function is as follows. The pyruvate dehydrogenase complex catalyzes the overall conversion of pyruvate to acetyl-CoA and CO(2). It contains multiple copies of three enzymatic components: pyruvate dehydrogenase (E1), dihydrolipoamide acetyltransferase (E2) and lipoamide dehydrogenase (E3). In Buchnera aphidicola subsp. Acyrthosiphon pisum (strain APS) (Acyrthosiphon pisum symbiotic bacterium), this protein is Dihydrolipoyllysine-residue acetyltransferase component of pyruvate dehydrogenase complex (aceF).